The primary structure comprises 284 residues: Bifunctional protein FolD (284 aa).

NADP(+)-binding positions include 165 to 167 (GRG), T192, and V233.

It belongs to the tetrahydrofolate dehydrogenase/cyclohydrolase family. Homodimer.

It carries out the reaction (6R)-5,10-methylene-5,6,7,8-tetrahydrofolate + NADP(+) = (6R)-5,10-methenyltetrahydrofolate + NADPH. It catalyses the reaction (6R)-5,10-methenyltetrahydrofolate + H2O = (6R)-10-formyltetrahydrofolate + H(+). The protein operates within one-carbon metabolism; tetrahydrofolate interconversion. Functionally, catalyzes the oxidation of 5,10-methylenetetrahydrofolate to 5,10-methenyltetrahydrofolate and then the hydrolysis of 5,10-methenyltetrahydrofolate to 10-formyltetrahydrofolate. This is Bifunctional protein FolD from Corynebacterium efficiens (strain DSM 44549 / YS-314 / AJ 12310 / JCM 11189 / NBRC 100395).